A 556-amino-acid polypeptide reads, in one-letter code: Sphingomyelinase C (556 aa).

A signal peptide spans 1–27 (MRIKKYTKVRLLVNCCLLLFFLIDCGA).

It localises to the secreted. It carries out the reaction a sphingomyelin + H2O = phosphocholine + an N-acylsphing-4-enine + H(+). This is Sphingomyelinase C (sph) from Leptospira interrogans.